Consider the following 494-residue polypeptide: Nuclear distribution protein PAC1 (494 aa).

A LisH domain is found at 14-46 (QKNELDKSVLRYLNWNYKQTVRHEHAQDYESVR). Residues 90–123 (NSIVRLQKKIIELEQNTETLVSQIKDLNTQVSEL) are a coiled coil. WD repeat units follow at residues 153–192 (NVES…IPLA), 196–244 (SHTK…CKFQ), 251–292 (GHEH…SLKT), 295–334 (PHSQ…SVGT), 347–395 (HFIE…LMAH), 415–454 (GHLS…HVWE), and 457–492 (HTGF…SNVF).

Belongs to the WD repeat LIS1/nudF family. As to quaternary structure, self-associates. Interacts with NDL1 and dynein.

The protein resides in the cytoplasm. It is found in the cytoskeleton. Its subcellular location is the spindle pole. Functionally, positively regulates the activity of the minus-end directed microtubule motor protein dynein. Plays a central role in positioning the mitotic spindle at the bud neck during cell division. Targets cytoplasmic dynein to microtubule plus ends, thereby promoting dynein-mediated microtubule sliding along the bud cortex and consequently the movement of the mitotic spindle to the bud neck. The sequence is that of Nuclear distribution protein PAC1 from Saccharomyces cerevisiae (strain JAY291) (Baker's yeast).